The following is a 301-amino-acid chain: Hydroxymethylglutaryl-CoA lyase (301 aa).

The Pyruvate carboxyltransferase domain occupies 4–271 (VKVFEVGPRD…STGVDLEAVA (268 aa)). Residue Arg-12 coordinates substrate. Residues Asp-13, His-204, and His-206 each coordinate a divalent metal cation. Residue Cys-237 is part of the active site. Asn-246 serves as a coordination point for a divalent metal cation.

It belongs to the HMG-CoA lyase family.

It catalyses the reaction (3S)-3-hydroxy-3-methylglutaryl-CoA = acetoacetate + acetyl-CoA. It functions in the pathway metabolic intermediate metabolism; (S)-3-hydroxy-3-methylglutaryl-CoA degradation; acetoacetate from (S)-3-hydroxy-3-methylglutaryl-CoA: step 1/1. Its function is as follows. Involved in the catabolism of branched amino acids such as leucine. This is Hydroxymethylglutaryl-CoA lyase (mvaB) from Pseudomonas mevalonii.